We begin with the raw amino-acid sequence, 261 residues long: Lys-63-specific deubiquitinase BRCC36 (261 aa).

The MPN domain maps to 6–149; the sequence is VHIQGDAFLV…YTCFQSVQAQ (144 aa). 3 residues coordinate Zn(2+): histidine 92, histidine 94, and aspartate 105. The JAMM motif signature appears at 92–105; the sequence is HSHPHITVWPSHVD.

This sequence belongs to the peptidase M67A family. BRCC36 subfamily. As to quaternary structure, component of the BRCA1-A complex, at least composed of brca1, bard1, uimc1/rap80, abraxas1, brcc3/brcc36, babam2 and babam1/nba1. In the BRCA1-A complex, interacts directly with abraxas1 and babam2. Component of the BRISC complex, at least composed of abraxas2, brcc3/brcc36, babam2 and babam1/nba1. Within the complex, interacts directly with abraxas2. Both the BRCA1-A complex and the BRISC complex bind polyubiquitin. Zn(2+) serves as cofactor.

It localises to the nucleus. The protein localises to the cytoplasm. Its subcellular location is the cytoskeleton. The protein resides in the spindle pole. Functionally, metalloprotease that specifically cleaves 'Lys-63'-linked polyubiquitin chains. Does not have activity toward 'Lys-48'-linked polyubiquitin chains. Component of the BRCA1-A complex, a complex that specifically recognizes 'Lys-63'-linked ubiquitinated histones H2A and H2AX at DNA lesions sites, leading to target the brca1-bard1 heterodimer to sites of DNA damage at double-strand breaks (DSBs). In the BRCA1-A complex, it specifically removes 'Lys-63'-linked ubiquitin on histones H2A and H2AX, antagonizing the rnf8-dependent ubiquitination at double-strand breaks (DSBs). Catalytic subunit of the BRISC complex, a multiprotein complex that specifically cleaves 'Lys-63'-linked ubiquitin in various substrates. Mediates the specific 'Lys-63'-specific deubiquitination associated with the COP9 signalosome complex (CSN), via the interaction of the BRISC complex with the CSN complex. The BRISC complex is required for normal mitotic spindle assembly and microtubule attachment to kinetochores via its role in deubiquitinating numa1. Plays a role in interferon signaling via its role in the deubiquitination of the interferon receptor ifnar1; deubiquitination increases ifnar1 activity by enhancing its stability and cell surface expression. Acts as a regulator of the NLRP3 inflammasome by mediating deubiquitination of nlrp3. Down-regulates the response to bacterial lipopolysaccharide (LPS) via its role in ifnar1 deubiquitination. In Xenopus tropicalis (Western clawed frog), this protein is Lys-63-specific deubiquitinase BRCC36 (brcc3).